A 707-amino-acid chain; its full sequence is E3 ubiquitin-protein ligase Praja-2 (707 aa).

The span at 1 to 10 shows a compositional bias: basic and acidic residues; sequence MSQYTEKEPS. 3 disordered regions span residues 1-23, 75-120, and 242-290; these read MSQY…AWPR, NTAG…PSVA, and AGDA…CVPG. Residue Ser-2 is modified to N-acetylserine. Positions 109 to 119 are enriched in polar residues; it reads LNQSTESNPSV. Residues 246 to 276 are compositionally biased toward basic and acidic residues; that stretch reads EAVHQDGQEFQRSSEDGIVRKRRQDDTDQGR. A phosphoserine mark is found at Ser-306 and Ser-320. Residue Ser-339 is modified to Phosphoserine; by PKA. Disordered regions lie at residues 380 to 403 and 424 to 493; these read VTPR…GRQE and EDSS…QTSL. Basic and acidic residues predominate over residues 381-391; that stretch reads TPREAERHRAT. Ser-430 bears the Phosphoserine mark. A compositionally biased stretch (acidic residues) spans 465–481; sequence NEPELQSDSSGPEEENQ. The span at 482–491 shows a compositional bias: polar residues; the sequence is ELSLQEGEQT. An interaction with PRKAR1A, PRKAR2A and PRKAR2B region spans residues 530–707; that stretch reads DGNNNLEDDS…PANDNAEEAP (178 aa). A mediates interaction with TBC1D31 region spans residues 549–569; sequence WSLFDGFADGLGVAEAISYVD. An RING-type; atypical zinc finger spans residues 633-674; it reads CPICCSEYIKDDIATELPCHHFFHKPCVSIWLQKSGTCPVCR. The tract at residues 686–707 is disordered; that stretch reads AAASSEPDLDASPANDNAEEAP.

As to quaternary structure, binds ubiquitin-conjugating enzymes (E2s). In vitro, interacts with the ubiquitin-conjugating enzyme, UBE2D2. The phosphorylated form interacts with PRKAR1A, PRKAR2A and PRKAR2B. Binds the catalytic subunits of cAMP-dependent protein kinase. Interacts with MFHAS1. Interacts with TBC1D31; the interaction is direct and recruits PJA2 to centrosomes. In terms of tissue distribution, highly expressed in the brain, in nerve cells but not in glial cells. Abundantly expressed in pyramidal neurons and in the CA3 region of apical dendrites. Colocalizes with PRKAR2B in dentate granule cells and at postsynaptic sites of primary hippocampal neurons.

It localises to the cytoplasm. The protein resides in the cell membrane. The protein localises to the endoplasmic reticulum membrane. Its subcellular location is the golgi apparatus membrane. It is found in the synapse. It localises to the postsynaptic density. The protein resides in the cytoskeleton. The protein localises to the microtubule organizing center. Its subcellular location is the centrosome. It carries out the reaction S-ubiquitinyl-[E2 ubiquitin-conjugating enzyme]-L-cysteine + [acceptor protein]-L-lysine = [E2 ubiquitin-conjugating enzyme]-L-cysteine + N(6)-ubiquitinyl-[acceptor protein]-L-lysine.. The protein operates within protein modification; protein ubiquitination. Has E2-dependent E3 ubiquitin-protein ligase activity. Responsible for ubiquitination of cAMP-dependent protein kinase type I and type II-alpha/beta regulatory subunits and for targeting them for proteasomal degradation. Essential for PKA-mediated long-term memory processes. Through the ubiquitination of MFHAS1, positively regulates the TLR2 signaling pathway that leads to the activation of the downstream p38 and JNK MAP kinases and promotes the polarization of macrophages toward the pro-inflammatory M1 phenotype. Plays a role in ciliogenesis by ubiquitinating OFD1. This Rattus norvegicus (Rat) protein is E3 ubiquitin-protein ligase Praja-2 (Pja2).